The sequence spans 402 residues: Protein FixF (402 aa).

This Sinorhizobium fredii (strain NBRC 101917 / NGR234) protein is Protein FixF (fixF).